We begin with the raw amino-acid sequence, 289 residues long: Putative 2-aminoethylphosphonate transport system permease protein PhnU (289 aa).

6 consecutive transmembrane segments (helical) span residues 19–39, 76–96, 111–131, 150–170, 202–222, and 254–274; these read WLLL…SLIV, FFAT…LVFI, FIAL…GSAG, FLYS…PLVM, VIFP…LLLT, and YTVA…LFSL. The region spanning 68 to 275 is the ABC transmembrane type-1 domain; the sequence is LLNTLQIAFF…VLSLGLFSLY (208 aa).

Belongs to the binding-protein-dependent transport system permease family.

It is found in the cell inner membrane. Functionally, probably part of the PhnSTUV complex (TC 3.A.1.11.5) involved in 2-aminoethylphosphonate import. Probably responsible for the translocation of the substrate across the membrane. The sequence is that of Putative 2-aminoethylphosphonate transport system permease protein PhnU (phnU) from Salmonella paratyphi A (strain ATCC 9150 / SARB42).